The chain runs to 327 residues: L-lactate dehydrogenase (327 aa).

NAD(+) is bound by residues valine 18, aspartate 39, lysine 44, tyrosine 69, and 83–84 (GA). Substrate contacts are provided by residues glutamine 86, arginine 92, and 124-127 (NPVD). Residues 122-124 (AAN) and serine 147 each bind NAD(+). 152–155 (DSAR) serves as a coordination point for substrate. Positions 157 and 172 each coordinate beta-D-fructose 1,6-bisphosphate. The active-site Proton acceptor is histidine 179. Tyrosine 224 carries the phosphotyrosine modification. Threonine 233 serves as a coordination point for substrate.

Belongs to the LDH/MDH superfamily. LDH family. In terms of assembly, homotetramer.

The protein localises to the cytoplasm. The enzyme catalyses (S)-lactate + NAD(+) = pyruvate + NADH + H(+). Its pathway is fermentation; pyruvate fermentation to lactate; (S)-lactate from pyruvate: step 1/1. Its activity is regulated as follows. Allosterically activated by fructose 1,6-bisphosphate (FBP). Catalyzes the conversion of lactate to pyruvate. The chain is L-lactate dehydrogenase from Streptococcus pyogenes serotype M3 (strain SSI-1).